A 158-amino-acid polypeptide reads, in one-letter code: Lysozyme C (158 aa).

Positions 1–18 are cleaved as a signal peptide; sequence MRVLPLALLVGLLAVSDA. One can recognise a C-type lysozyme domain in the interval 19 to 150; sequence KVLGKCEFAR…DQYMAECWSR (132 aa). 4 disulfide bridges follow: Cys24-Cys147, Cys46-Cys135, Cys80-Cys93, and Cys89-Cys107. Active-site residues include Glu51 and Asp68.

Belongs to the glycosyl hydrolase 22 family. Monomer. In terms of tissue distribution, strongly expressed in gill and gonad, and marginally detectable in hemolymph and lymphoid organ. Not expressed in kidney, hepatopancreas or tail muscle.

It localises to the secreted. It carries out the reaction Hydrolysis of (1-&gt;4)-beta-linkages between N-acetylmuramic acid and N-acetyl-D-glucosamine residues in a peptidoglycan and between N-acetyl-D-glucosamine residues in chitodextrins.. Functionally, lysozymes have primarily a bacteriolytic function; those in tissues and body fluids are associated with the monocyte-macrophage system and enhance the activity of immunoagents. Has bacteriolytic activity against Gram-positive bacterium M.luteus, and Gram-negative shrimp pathogenic bacteria V.alginolyticus, V.parahaemolyticus and V.vulnificus. May play a role in host defense. The polypeptide is Lysozyme C (Penaeus merguiensis (Banana prawn)).